Consider the following 397-residue polypeptide: Subtilisin-like protease 3 (397 aa).

Positions 1–19 are cleaved as a signal peptide; it reads MGCIKVISVFLAAIAAVDA. Positions 20-116 are excised as a propeptide; that stretch reads RAFFHNRGGN…VEHDRVVKLA (97 aa). The region spanning 35 to 116 is the Inhibitor I9 domain; the sequence is SYIVVMKDGV…VEHDRVVKLA (82 aa). Residues 126–397 enclose the Peptidase S8 domain; it reads TWGLGRVSHK…NRLLYNGSGR (272 aa). Catalysis depends on charge relay system residues Asp-158 and His-189. Asn-250 carries N-linked (GlcNAc...) asparagine glycosylation. The active-site Charge relay system is the Ser-344. An N-linked (GlcNAc...) asparagine glycan is attached at Asn-393.

Belongs to the peptidase S8 family.

Its subcellular location is the secreted. Secreted subtilisin-like serine protease with keratinolytic activity that contributes to pathogenicity. The chain is Subtilisin-like protease 3 (SUB3) from Arthroderma benhamiae (strain ATCC MYA-4681 / CBS 112371) (Trichophyton mentagrophytes).